A 374-amino-acid chain; its full sequence is dTDP-3-amino-3,4,6-trideoxy-alpha-D-glucose transaminase (374 aa).

Pyridoxal 5'-phosphate is bound by residues glycine 60, glutamine 160, 181 to 186, tyrosine 214, tyrosine 221, 229 to 231, and tyrosine 316; these read SFYPTK and NSR. N6-(pyridoxal phosphate)lysine is present on lysine 186.

This sequence belongs to the degT/dnrJ/eryC1 family. It depends on pyridoxal 5'-phosphate as a cofactor.

It catalyses the reaction dTDP-3-amino-3,4,6-trideoxy-alpha-D-glucose + 2-oxoglutarate = dTDP-3-dehydro-4,6-dideoxy-alpha-D-glucose + L-glutamate. It participates in antibiotic biosynthesis. In terms of biological role, involved in the biosynthesis of the amino sugar dTDP-L-megosamine which is found in the macrolide antibiotic and antiparasitic megalomicin A. Catalyzes the reversible transfer of the amino group from L-glutamate to the C-3 position of dTDP-3-keto-4,6-deoxyglucose to yield dTDP-3-amino-3,4,6-trideoxyglucose. This is dTDP-3-amino-3,4,6-trideoxy-alpha-D-glucose transaminase from Micromonospora megalomicea subsp. nigra.